Reading from the N-terminus, the 187-residue chain is Probable chorismate pyruvate-lyase (187 aa).

Substrate is bound by residues Arg80, Leu117, and Glu176.

This sequence belongs to the UbiC family.

The protein resides in the cytoplasm. The enzyme catalyses chorismate = 4-hydroxybenzoate + pyruvate. Its pathway is cofactor biosynthesis; ubiquinone biosynthesis. Its function is as follows. Removes the pyruvyl group from chorismate, with concomitant aromatization of the ring, to provide 4-hydroxybenzoate (4HB) for the ubiquinone pathway. The protein is Probable chorismate pyruvate-lyase of Halorhodospira halophila (strain DSM 244 / SL1) (Ectothiorhodospira halophila (strain DSM 244 / SL1)).